The primary structure comprises 609 residues: Alpha-fetoprotein (609 aa).

An N-terminal signal peptide occupies residues 1–18; sequence MKWVESIFLIFLLNFTES. Albumin domains are found at residues 19-210, 211-402, and 403-601; these read RTLH…ATVT, KELR…EELQ, and KYIQ…KLIS. A Cu(2+)-binding site is contributed by His-22. Residue Asn-42 is glycosylated (N-linked (GlcNAc...) asparagine). 8 cysteine pairs are disulfide-bonded: Cys-99–Cys-114, Cys-113–Cys-124, Cys-148–Cys-193, Cys-192–Cys-201, Cys-224–Cys-270, Cys-269–Cys-277, Cys-289–Cys-303, and Cys-302–Cys-313. 3 positions are modified to phosphoserine: Ser-111, Ser-115, and Ser-117. Residue Asn-251 is glycosylated (N-linked (GlcNAc...) asparagine). At Ser-344 the chain carries Phosphoserine. 7 disulfide bridges follow: Cys-384–Cys-393, Cys-416–Cys-462, Cys-461–Cys-472, Cys-485–Cys-501, Cys-500–Cys-511, Cys-538–Cys-583, and Cys-582–Cys-591. Ser-444 carries the phosphoserine modification.

This sequence belongs to the ALB/AFP/VDB family. In terms of assembly, dimeric and trimeric forms have been found in addition to the monomeric form. Plasma. Synthesized by the fetal liver and yolk sac.

It is found in the secreted. Binds copper, nickel, and fatty acids as well as, and bilirubin less well than, serum albumin. In Pan troglodytes (Chimpanzee), this protein is Alpha-fetoprotein (AFP).